The primary structure comprises 71 residues: UPF0437 protein asl1434 (71 aa).

This sequence belongs to the UPF0437 family.

The chain is UPF0437 protein asl1434 from Nostoc sp. (strain PCC 7120 / SAG 25.82 / UTEX 2576).